Consider the following 105-residue polypeptide: Thioredoxin (105 aa).

The Thioredoxin domain maps to 1–105; sequence MANNVMDSSF…SLLDWINKSI (105 aa). Cys-30 and Cys-33 are oxidised to a cystine.

This sequence belongs to the thioredoxin family.

Component of the thioredoxin-thioredoxin reductase system. Participates in various redox reactions through the reversible oxidation of its active center dithiol to a disulfide and catalyzes dithiol-disulfide exchange reactions. This chain is Thioredoxin (trxA), found in Rickettsia conorii (strain ATCC VR-613 / Malish 7).